The following is a 140-amino-acid chain: Odorant-binding protein 10 (140 aa).

An N-terminal signal peptide occupies residues 1 to 25 (MTSFRLANLTVFLVLLFCFMRGVHS).

This sequence belongs to the PBP/GOBP family. In terms of tissue distribution, high-level expression in female mouth parts, particularly in the proboscis (at protein level). Low-level expression in female antenna (at protein level). Female salivary gland. Female chemosensory organs: antenna, palp and proboscis. Male antenna, wing and maxillary palp. Expressed at higher levels in male tissues compared to female tissues. Not detected in midgut.

Its subcellular location is the secreted. Functionally, involved in modulation of blood-feeding behavior and capacity in female mosquitoes. Required for normal oviposition. Required for normal fecundity and fertility of female mosquitoes. Required for normal expression of VGA1 gene, which encodes the egg yolk protein vitellogenin-A1. Required for normal female longevity when mosquitoes are maintained on regular sugar meal. In terms of biological role, (Microbial infection) Facilitates shedding of dengue virus type 2 particles into mosquito saliva. Does not affect dengue virus type 2 replication or infection prevalence in midgut and salivary glands at 14 days after blood feeding. (Microbial infection) Facilitates shedding of Zika virus particles into mosquito saliva. Does not affect Zika virus replication or infection prevalence in midgut and salivary glands at 14 days after blood feeding. The sequence is that of Odorant-binding protein 10 from Aedes aegypti (Yellowfever mosquito).